Consider the following 21-residue polypeptide: Thylakoid lumenal 13.8 kDa protein (21 aa).

It localises to the plastid. The protein resides in the chloroplast thylakoid lumen. This chain is Thylakoid lumenal 13.8 kDa protein, found in Spinacia oleracea (Spinach).